Here is a 274-residue protein sequence, read N- to C-terminus: Large ribosomal subunit protein uL2 (274 aa).

2 disordered regions span residues 28 to 54 (APHA…TRHI) and 224 to 274 (VAMN…RRRK). Positions 263-274 (KRTDKMIVRRRK) are enriched in basic and acidic residues.

The protein belongs to the universal ribosomal protein uL2 family. Part of the 50S ribosomal subunit. Forms a bridge to the 30S subunit in the 70S ribosome.

In terms of biological role, one of the primary rRNA binding proteins. Required for association of the 30S and 50S subunits to form the 70S ribosome, for tRNA binding and peptide bond formation. It has been suggested to have peptidyltransferase activity; this is somewhat controversial. Makes several contacts with the 16S rRNA in the 70S ribosome. This is Large ribosomal subunit protein uL2 from Pseudomonas fluorescens (strain SBW25).